A 347-amino-acid polypeptide reads, in one-letter code: UDP-N-acetylenolpyruvoylglucosamine reductase (347 aa).

Residues 16 to 187 form the FAD-binding PCMH-type domain; that stretch reads AIEQCSHYLV…IAVGLKLPKT (172 aa). Residue arginine 163 is part of the active site. The Proton donor role is filled by serine 233. Glutamate 328 is a catalytic residue.

Belongs to the MurB family. It depends on FAD as a cofactor.

Its subcellular location is the cytoplasm. The catalysed reaction is UDP-N-acetyl-alpha-D-muramate + NADP(+) = UDP-N-acetyl-3-O-(1-carboxyvinyl)-alpha-D-glucosamine + NADPH + H(+). It functions in the pathway cell wall biogenesis; peptidoglycan biosynthesis. Functionally, cell wall formation. The sequence is that of UDP-N-acetylenolpyruvoylglucosamine reductase from Vibrio vulnificus (strain YJ016).